The primary structure comprises 85 residues: Small ribosomal subunit protein uS17 (85 aa).

Belongs to the universal ribosomal protein uS17 family. Part of the 30S ribosomal subunit.

One of the primary rRNA binding proteins, it binds specifically to the 5'-end of 16S ribosomal RNA. The chain is Small ribosomal subunit protein uS17 from Mycoplasma pneumoniae (strain ATCC 29342 / M129 / Subtype 1) (Mycoplasmoides pneumoniae).